The chain runs to 247 residues: Programmed cell death 1 ligand 2 (247 aa).

An N-terminal signal peptide occupies residues 1 to 19; that stretch reads MLLLLPILNLSLQLHPVAA. Topologically, residues 20-221 are extracellular; that stretch reads LFTVTAPKEV…RMEPKVPRTW (202 aa). An Ig-like V-type domain is found at 21 to 118; sequence FTVTAPKEVY…AWDYKYLTVK (98 aa). 2 cysteine pairs are disulfide-bonded: cysteine 42–cysteine 102 and cysteine 143–cysteine 192. Asparagine 64, asparagine 157, asparagine 163, and asparagine 189 each carry an N-linked (GlcNAc...) asparagine glycan. The 82-residue stretch at 122 to 203 folds into the Ig-like C2-type domain; that stretch reads SYMRIDTRIL…FWNAHMKELT (82 aa). The chain crosses the membrane as a helical span at residues 222-242; it reads PLHVFIPACTIALIFLAIVII. The Cytoplasmic segment spans residues 243 to 247; the sequence is QRKRI.

Belongs to the immunoglobulin superfamily. BTN/MOG family. Interacts with PDCD1. In terms of tissue distribution, expressed in immature and mature bone marrow-derived dendritic cells and splenic dendritic cells. Highly expressed in placenta, liver and weakly expressed in heart, spleen, lymph nodes and thymus. Also expressed in some tumor cell lines of lymphoid origin.

The protein resides in the cell membrane. Its function is as follows. Involved in the costimulatory signal essential for T-cell proliferation and IFNG production in a PDCD1-independent manner. Interaction with PDCD1 inhibits T-cell proliferation by blocking cell cycle progression and cytokine production. This Mus musculus (Mouse) protein is Programmed cell death 1 ligand 2 (Pdcd1lg2).